The sequence spans 490 residues: GTPase Der (490 aa).

EngA-type G domains lie at Pro3 to Leu166 and Ile203 to Thr376. GTP-binding positions include Gly9 to Ser16, Asp56 to Ile60, Asn118 to Asp121, Gly209 to Ser216, Asp256 to Val260, and Asn321 to Asp324. Residues Arg377–Glu461 form the KH-like domain.

This sequence belongs to the TRAFAC class TrmE-Era-EngA-EngB-Septin-like GTPase superfamily. EngA (Der) GTPase family. As to quaternary structure, associates with the 50S ribosomal subunit.

Functionally, GTPase that plays an essential role in the late steps of ribosome biogenesis. The chain is GTPase Der from Shigella flexneri serotype 5b (strain 8401).